A 495-amino-acid polypeptide reads, in one-letter code: Trigger factor (495 aa).

The 82-residue stretch at D162–P243 folds into the PPIase FKBP-type domain. Residues D425–F437 are compositionally biased toward basic and acidic residues. The interval D425 to K495 is disordered. A compositionally biased stretch (low complexity) spans S450–A461. Positions T486 to K495 are enriched in acidic residues.

It belongs to the FKBP-type PPIase family. Tig subfamily.

The protein resides in the cytoplasm. It carries out the reaction [protein]-peptidylproline (omega=180) = [protein]-peptidylproline (omega=0). Functionally, involved in protein export. Acts as a chaperone by maintaining the newly synthesized protein in an open conformation. Functions as a peptidyl-prolyl cis-trans isomerase. This is Trigger factor from Corynebacterium kroppenstedtii (strain DSM 44385 / JCM 11950 / CIP 105744 / CCUG 35717).